We begin with the raw amino-acid sequence, 41 residues long: Large ribosomal subunit protein bL36B (41 aa).

The protein belongs to the bacterial ribosomal protein bL36 family.

The protein is Large ribosomal subunit protein bL36B of Neisseria meningitidis serogroup C (strain 053442).